The following is a 313-amino-acid chain: MTDQMRDMIAQLMGSQHVDNKEKPSMPFDHHSVCRAFLLGVCPHDMVPDSRLQNVVSCRKVHEPAHKADYERAQKEKDHFYDVDAFEIIEHAVHLVDIEIAKVREKLEDDVKTQTSQAADSKAKQVAEIEEKIAKNVDDIEKLGNEGKIEESMKLHKYVEELREKIQEIEDSQTEVKTAGPGSNSAKLRVCEDCGAQLNITDHESRIADHYNGKMHIGMVETRETYLKMKETIDERRKEREEKLGSQRGYQRRESYGRRDRGGDRGEYRGDRDRDRRNRDRSRSRDRSYRRDDRGDRRYDRDNRDRRDRDRRY.

The tract at residues 237–313 (RKEREEKLGS…RDRRDRDRRY (77 aa)) is disordered.

The protein belongs to the Luc7 family.

The polypeptide is LUC7-related splicing factor homolog (Caenorhabditis elegans).